Reading from the N-terminus, the 381-residue chain is Chymosin (381 aa).

An N-terminal signal peptide occupies residues 1–16 (MRGFVVLLAVFALSQA). The propeptide at 17 to 58 (SGIVRIPLHKGKSLRRALKERGLLEDFLKNHQHAVSRKHSNS) is activation peptide. Positions 74–378 (YFGKIYIGTP…DRASNLVGLA (305 aa)) constitute a Peptidase A1 domain. Asp-92 is an active-site residue. Residues 92-102 (DTGSSDLWVPS) form repeat 1. 2 disulfides stabilise this stretch: Cys-105-Cys-110 and Cys-265-Cys-269. Asp-274 is an active-site residue. Repeat unit 2 spans residues 274-284 (DTGTSMLVGPG). A disulfide bond links Cys-308 and Cys-341.

Belongs to the peptidase A1 family. In terms of assembly, monomer.

The enzyme catalyses Broad specificity similar to that of pepsin A. Clots milk by cleavage of a single 104-Ser-Phe-|-Met-Ala-107 bond in kappa-chain of casein.. With respect to regulation, inhibited by pepstatin. Functionally, hydrolyzes a variety of proteins. The sequence is that of Chymosin (CYM) from Callithrix jacchus (White-tufted-ear marmoset).